Consider the following 524-residue polypeptide: MNDFWQHCSALLERELTPQQYVTWIKPLAPVAFDASANTLSIAAPNRFKLDWVKSQFSGRIADLARDFWNAPIEVQFVLDPKAGMRSPAAGAAPAAPRAPLASGPAATVAAIAANLTANQSATPAAPADVPMTPSAAAAHHLNNDDADIDLPSLPAHEAAAGRRTWRPGPGAAPAAGGEADSMYERSKLNPVLTFDNFVTGKANQLARAAAIQVADNPGISYNPLFLYGGVGLGKTHLIHAIGNQLLLDKPGARIRYIHAEQYVSDVVKAYQRKAFDDFKRYYHSLDLLLIDDIQFFSGKSRTQEEFFYAFEALVANKAQVIITSDTYPKEISGIDDRLISRFDSGLTVAIEPPELEMRVAILMRKAQSEGVNLSEDVAFFVAKHLRSNVRELEGALRKILAYSKFHGREISIELTKEALKDLLTVQNRQISVENIQKTVADFYNIKVADMYSKKRPANIARPRQIAMYLAKELTQKSLPEIGELFGGRDHTTVLHAVRKIADERSKDAQLNHELHVLEQTLKG.

The interval Met1–Pro72 is domain I, interacts with DnaA modulators. The interval Pro72–Ser187 is domain II. The domain III, AAA+ region stretch occupies residues Lys188–Ser404. The ATP site is built by Gly232, Gly234, Lys235, and Thr236. A domain IV, binds dsDNA region spans residues Lys405–Gly524.

This sequence belongs to the DnaA family. As to quaternary structure, oligomerizes as a right-handed, spiral filament on DNA at oriC.

The protein localises to the cytoplasm. Functionally, plays an essential role in the initiation and regulation of chromosomal replication. ATP-DnaA binds to the origin of replication (oriC) to initiate formation of the DNA replication initiation complex once per cell cycle. Binds the DnaA box (a 9 base pair repeat at the origin) and separates the double-stranded (ds)DNA. Forms a right-handed helical filament on oriC DNA; dsDNA binds to the exterior of the filament while single-stranded (ss)DNA is stabiized in the filament's interior. The ATP-DnaA-oriC complex binds and stabilizes one strand of the AT-rich DNA unwinding element (DUE), permitting loading of DNA polymerase. After initiation quickly degrades to an ADP-DnaA complex that is not apt for DNA replication. Binds acidic phospholipids. In Burkholderia multivorans (strain ATCC 17616 / 249), this protein is Chromosomal replication initiator protein DnaA.